The primary structure comprises 336 residues: uncharacterized protein (336 aa).

29–36 contacts ATP; it reads GPKSSGKS.

Belongs to the archaeal ATPase family.

This is an uncharacterized protein from Methanocaldococcus jannaschii (strain ATCC 43067 / DSM 2661 / JAL-1 / JCM 10045 / NBRC 100440) (Methanococcus jannaschii).